A 473-amino-acid polypeptide reads, in one-letter code: Bifunctional protein HldE (473 aa).

Positions 1-316 (MILPDFSLAR…AIAIHGQRAP (316 aa)) are ribokinase. 193-196 (NLSE) lines the ATP pocket. The active site involves Asp262. The interval 342–473 (VTNGCFDLLH…TRIIEAIRNG (132 aa)) is cytidylyltransferase.

This sequence in the N-terminal section; belongs to the carbohydrate kinase PfkB family. The protein in the C-terminal section; belongs to the cytidylyltransferase family. Homodimer.

The enzyme catalyses D-glycero-beta-D-manno-heptose 7-phosphate + ATP = D-glycero-beta-D-manno-heptose 1,7-bisphosphate + ADP + H(+). It catalyses the reaction D-glycero-beta-D-manno-heptose 1-phosphate + ATP + H(+) = ADP-D-glycero-beta-D-manno-heptose + diphosphate. The protein operates within nucleotide-sugar biosynthesis; ADP-L-glycero-beta-D-manno-heptose biosynthesis; ADP-L-glycero-beta-D-manno-heptose from D-glycero-beta-D-manno-heptose 7-phosphate: step 1/4. It functions in the pathway nucleotide-sugar biosynthesis; ADP-L-glycero-beta-D-manno-heptose biosynthesis; ADP-L-glycero-beta-D-manno-heptose from D-glycero-beta-D-manno-heptose 7-phosphate: step 3/4. Functionally, catalyzes the phosphorylation of D-glycero-D-manno-heptose 7-phosphate at the C-1 position to selectively form D-glycero-beta-D-manno-heptose-1,7-bisphosphate. Its function is as follows. Catalyzes the ADP transfer from ATP to D-glycero-beta-D-manno-heptose 1-phosphate, yielding ADP-D-glycero-beta-D-manno-heptose. The protein is Bifunctional protein HldE of Methylococcus capsulatus (strain ATCC 33009 / NCIMB 11132 / Bath).